Reading from the N-terminus, the 172-residue chain is C-phycocyanin beta subunit (172 aa).

Asn-72 is subject to N4-methylasparagine. The (2R,3E)-phycocyanobilin site is built by Cys-82 and Cys-153.

The protein belongs to the phycobiliprotein family. In terms of assembly, the alpha and beta subunits exhibit high affinity for one another and form heterodimers. These heterodimers form heterohexamers of 3 alpha and 3 beta subunits which, in turn, aggregate into a heterododecamer consisting of 2 heterohexamers. Post-translationally, contains two covalently linked bilin chromophores.

It localises to the cellular thylakoid membrane. In terms of biological role, light-harvesting photosynthetic bile pigment-protein from the phycobiliprotein complex (phycobilisome, PBS). Phycocyanin is the major phycobiliprotein in the PBS rod. The polypeptide is C-phycocyanin beta subunit (cpcB) (Arthrospira platensis (Spirulina platensis)).